A 251-amino-acid chain; its full sequence is NADPH-dependent oxidoreductase (251 aa).

It belongs to the flavin oxidoreductase frp family. Requires FMN as cofactor.

In terms of biological role, reduces FMN, organic nitro compounds and disulfide DTNB. Involved in maintenance of the cellular redox state and the disulfide stress response. This is NADPH-dependent oxidoreductase (nfrA) from Staphylococcus aureus (strain bovine RF122 / ET3-1).